The sequence spans 207 residues: Peptidyl-tRNA hydrolase (207 aa).

Y14 contributes to the tRNA binding site. H19 functions as the Proton acceptor in the catalytic mechanism. Positions 64, 66, and 112 each coordinate tRNA.

It belongs to the PTH family. Monomer.

It is found in the cytoplasm. The enzyme catalyses an N-acyl-L-alpha-aminoacyl-tRNA + H2O = an N-acyl-L-amino acid + a tRNA + H(+). Its function is as follows. Hydrolyzes ribosome-free peptidyl-tRNAs (with 1 or more amino acids incorporated), which drop off the ribosome during protein synthesis, or as a result of ribosome stalling. Functionally, catalyzes the release of premature peptidyl moieties from peptidyl-tRNA molecules trapped in stalled 50S ribosomal subunits, and thus maintains levels of free tRNAs and 50S ribosomes. The chain is Peptidyl-tRNA hydrolase from Rhodopseudomonas palustris (strain BisB5).